Consider the following 70-residue polypeptide: ATP synthase subunit c (70 aa).

2 helical membrane-spanning segments follow: residues 5–25 (AAAIAIGLAALGAGIGNGLIV) and 47–67 (FIGVALVEAIPIIAVVIAFMV).

This sequence belongs to the ATPase C chain family. In terms of assembly, F-type ATPases have 2 components, F(1) - the catalytic core - and F(0) - the membrane proton channel. F(1) has five subunits: alpha(3), beta(3), gamma(1), delta(1), epsilon(1). F(0) has three main subunits: a(1), b(2) and c(10-14). The alpha and beta chains form an alternating ring which encloses part of the gamma chain. F(1) is attached to F(0) by a central stalk formed by the gamma and epsilon chains, while a peripheral stalk is formed by the delta and b chains.

Its subcellular location is the cell membrane. F(1)F(0) ATP synthase produces ATP from ADP in the presence of a proton or sodium gradient. F-type ATPases consist of two structural domains, F(1) containing the extramembraneous catalytic core and F(0) containing the membrane proton channel, linked together by a central stalk and a peripheral stalk. During catalysis, ATP synthesis in the catalytic domain of F(1) is coupled via a rotary mechanism of the central stalk subunits to proton translocation. Its function is as follows. Key component of the F(0) channel; it plays a direct role in translocation across the membrane. A homomeric c-ring of between 10-14 subunits forms the central stalk rotor element with the F(1) delta and epsilon subunits. In Anoxybacillus flavithermus (strain DSM 21510 / WK1), this protein is ATP synthase subunit c.